A 290-amino-acid chain; its full sequence is 6-phospho-5-dehydro-2-deoxy-D-gluconate aldolase (290 aa).

D85 (proton donor) is an active-site residue. H86 and H180 together coordinate Zn(2+). Dihydroxyacetone phosphate is bound at residue G181. Residue H208 participates in Zn(2+) binding. Dihydroxyacetone phosphate contacts are provided by residues 209–211 (GAS) and 230–233 (NINT). The residue at position 233 (T233) is a Phosphothreonine.

Belongs to the class II fructose-bisphosphate aldolase family. IolJ subfamily. Requires Zn(2+) as cofactor.

It catalyses the reaction 6-phospho-5-dehydro-2-deoxy-D-gluconate = 3-oxopropanoate + dihydroxyacetone phosphate. Its pathway is polyol metabolism; myo-inositol degradation into acetyl-CoA; acetyl-CoA from myo-inositol: step 6/7. In terms of biological role, produces dihydroxyacetone phosphate (DHAP or glycerone phosphate) and malonic semialdehyde (MSA or 3-oxopropanoate) from 6-phospho-5-dehydro-2-deoxy-D-gluconate (DKGP). This chain is 6-phospho-5-dehydro-2-deoxy-D-gluconate aldolase (iolJ), found in Bacillus subtilis (strain 168).